The following is a 208-amino-acid chain: Protein-L-isoaspartate O-methyltransferase (208 aa).

Serine 59 is a catalytic residue.

This sequence belongs to the methyltransferase superfamily. L-isoaspartyl/D-aspartyl protein methyltransferase family.

The protein resides in the cytoplasm. The enzyme catalyses [protein]-L-isoaspartate + S-adenosyl-L-methionine = [protein]-L-isoaspartate alpha-methyl ester + S-adenosyl-L-homocysteine. Functionally, catalyzes the methyl esterification of L-isoaspartyl residues in peptides and proteins that result from spontaneous decomposition of normal L-aspartyl and L-asparaginyl residues. It plays a role in the repair and/or degradation of damaged proteins. This is Protein-L-isoaspartate O-methyltransferase from Pectobacterium atrosepticum (strain SCRI 1043 / ATCC BAA-672) (Erwinia carotovora subsp. atroseptica).